Reading from the N-terminus, the 622-residue chain is Chaperone protein HscA homolog (622 aa).

Belongs to the heat shock protein 70 family.

Chaperone involved in the maturation of iron-sulfur cluster-containing proteins. Has a low intrinsic ATPase activity which is markedly stimulated by HscB. This is Chaperone protein HscA homolog from Acidovorax ebreus (strain TPSY) (Diaphorobacter sp. (strain TPSY)).